Here is a 331-residue protein sequence, read N- to C-terminus: MKIAIYSTKSYDRKYIELINAKYNFDLEFFDFMLNESTVRLAEHCEVVCIFVNDNGSRKVLEKLAALGVKIVALRCAGFNNVDLKAAQELGIQVVRVPAYSPEAVAEHTIGLMMTLNRRIHRAYQRTREANFSLEGLIGFNMYGRTVGVIGTGKIGIAVMRILKGFGMNILAYDPFKNPVVEELGGQYVELDELYAKSHVITLHCPATPENYHLLNCEAFAKMKDGVMIVNTSRGSLIDTQAAIDALKQRKIGALGMDVYENERDLFFEDKSNEVIQDDIFRRLSSCHNVLLTGHQAFLTEEALTNIADVTLSNIYKLKSGKVCENIVLPS.

NAD(+) contacts are provided by residues 154–155 (KI), 232–234 (TSR), and Asp-258. Arg-234 is an active-site residue. The active site involves Glu-263. His-295 serves as the catalytic Proton donor. 295–298 (HQAF) contacts NAD(+).

The protein belongs to the D-isomer specific 2-hydroxyacid dehydrogenase family.

This chain is 2-hydroxyacid dehydrogenase homolog (ddh), found in Haemophilus influenzae (strain ATCC 51907 / DSM 11121 / KW20 / Rd).